The primary structure comprises 297 residues: Glucuronoxylan 4-O-methyltransferase 3 (297 aa).

A helical membrane pass occupies residues 9–29 (LNLKVIFIGSSILILIIIYLA). The segment covering 35–47 (SSSSKPISKTNLS) has biased composition (low complexity). The tract at residues 35 to 63 (SSSSKPISKTNLSQEEEETQHKQEGCPTT) is disordered.

It belongs to the methyltransferase superfamily. Expressed in hypocotyls, roots, rosette leaves, stems and siliques.

It localises to the golgi apparatus membrane. The enzyme catalyses glucuronoxylan D-glucuronate + n S-adenosyl-L-methionine = glucuronoxylan 4-O-methyl-D-glucuronate + n S-adenosyl-L-homocysteine + n H(+). In terms of biological role, methyltransferase catalyzing 4-O-methylation of glucuronic acid side chains on xylan. This Arabidopsis thaliana (Mouse-ear cress) protein is Glucuronoxylan 4-O-methyltransferase 3 (GXM3).